We begin with the raw amino-acid sequence, 218 residues long: Cytidylate kinase (218 aa).

Position 21–29 (21–29) interacts with ATP; that stretch reads GPAASGKGT.

It belongs to the cytidylate kinase family. Type 1 subfamily.

Its subcellular location is the cytoplasm. The enzyme catalyses CMP + ATP = CDP + ADP. It catalyses the reaction dCMP + ATP = dCDP + ADP. This is Cytidylate kinase from Rickettsia canadensis (strain McKiel).